Here is a 150-residue protein sequence, read N- to C-terminus: Cytochrome c oxidase subunit 5A, mitochondrial (150 aa).

A mitochondrion-targeting transit peptide spans 1-41 (MLGAALRRCAVAATTWAGPRGLLHSSRTPGPAAAIQSVRCY). The SIFI-degron motif lies at 2–17 (LGAALRRCAVAATTWA). Lysine 87 and lysine 113 each carry N6-acetyllysine. Threonine 141 bears the Phosphothreonine mark.

This sequence belongs to the cytochrome c oxidase subunit 5A family. In terms of assembly, component of the cytochrome c oxidase (complex IV, CIV), a multisubunit enzyme composed of 14 subunits. The complex is composed of a catalytic core of 3 subunits MT-CO1, MT-CO2 and MT-CO3, encoded in the mitochondrial DNA, and 11 supernumerary subunits COX4I, COX5A, COX5B, COX6A, COX6B, COX6C, COX7A, COX7B, COX7C, COX8 and NDUFA4, which are encoded in the nuclear genome. The complex exists as a monomer or a dimer and forms supercomplexes (SCs) in the inner mitochondrial membrane with NADH-ubiquinone oxidoreductase (complex I, CI) and ubiquinol-cytochrome c oxidoreductase (cytochrome b-c1 complex, complex III, CIII), resulting in different assemblies (supercomplex SCI(1)III(2)IV(1) and megacomplex MCI(2)III(2)IV(2)). Interacts with AFG1L. Interacts with RAB5IF. Post-translationally, in response to mitochondrial stress, the precursor protein is ubiquitinated by the SIFI complex in the cytoplasm before mitochondrial import, leading to its degradation. Within the SIFI complex, UBR4 initiates ubiquitin chain that are further elongated or branched by KCMF1.

The protein resides in the mitochondrion inner membrane. Its pathway is energy metabolism; oxidative phosphorylation. Functionally, component of the cytochrome c oxidase, the last enzyme in the mitochondrial electron transport chain which drives oxidative phosphorylation. The respiratory chain contains 3 multisubunit complexes succinate dehydrogenase (complex II, CII), ubiquinol-cytochrome c oxidoreductase (cytochrome b-c1 complex, complex III, CIII) and cytochrome c oxidase (complex IV, CIV), that cooperate to transfer electrons derived from NADH and succinate to molecular oxygen, creating an electrochemical gradient over the inner membrane that drives transmembrane transport and the ATP synthase. Cytochrome c oxidase is the component of the respiratory chain that catalyzes the reduction of oxygen to water. Electrons originating from reduced cytochrome c in the intermembrane space (IMS) are transferred via the dinuclear copper A center (CU(A)) of subunit 2 and heme A of subunit 1 to the active site in subunit 1, a binuclear center (BNC) formed by heme A3 and copper B (CU(B)). The BNC reduces molecular oxygen to 2 water molecules using 4 electrons from cytochrome c in the IMS and 4 protons from the mitochondrial matrix. The protein is Cytochrome c oxidase subunit 5A, mitochondrial (COX5A) of Colobus guereza (Mantled guereza).